The following is a 484-amino-acid chain: Probable metalloprotease ARX1 (484 aa).

This sequence belongs to the peptidase M24 family. In terms of assembly, component of the nucleoplasmic and cytoplasmic pre-60S ribosomal particles.

The protein localises to the cytoplasm. The protein resides in the nucleus. Its function is as follows. Probable metalloprotease involved in proper assembly of pre-ribosomal particles during the biogenesis of the 60S ribosomal subunit. Accompanies the pre-60S particles to the cytoplasm. This is Probable metalloprotease ARX1 (ARX1) from Yarrowia lipolytica (strain CLIB 122 / E 150) (Yeast).